Here is a 904-residue protein sequence, read N- to C-terminus: Disks large homolog 1 (904 aa).

An L27 domain is found at 4–64 (RKQDTQRALH…FYEVTLLDNP (61 aa)). A Phosphothreonine modification is found at Thr-115. Phosphoserine occurs at positions 122, 138, and 158. An interaction with SH3 domains region spans residues 162-212 (PTEAVLPSPPTVPVIPVLPVPAENTVILPTIPQANPPPVLVNTDSLETPTY). 3 PDZ domains span residues 224 to 310 (EITL…VKRR), 319 to 405 (EIKL…VAKP), and 466 to 546 (KVVL…AQYR). Positions 224–546 (EITLERGNSG…QAVTIVAQYR (323 aa)) are required for interaction with MARCHF2. Ser-232 is subject to Phosphoserine. Phosphotyrosine is present on Tyr-399. A phosphoserine mark is found at Ser-568, Ser-573, Ser-575, Ser-579, Ser-598, Ser-619, Ser-676, Ser-684, Ser-687, Gln-709, and Ser-834. One can recognise an SH3 domain in the interval 581-651 (KRSLYVRALF…PSKRRVEKKE (71 aa)). The disordered stretch occupies residues 662 to 693 (SKTRDKGEIPDDMGSKGLKHVTSNASDSESSY). Residues 682–693 (VTSNASDSESSY) show a composition bias toward polar residues. A Guanylate kinase-like domain is found at 714 to 889 (TRPVIILGPM…IYNQVKQIIE (176 aa)).

It belongs to the MAGUK family. As to quaternary structure, homotetramer. Interacts (via guanylate kinase-like domain) with DLGAP1, DLGAP2, DLGAP3, DLGAP4 and MAP1A. Interacts (via guanylate kinase-like domain) with KIF13B. May interact with HTR2A. Interacts (via PDZ domains) with GRIA1. Interacts (via PDZ domains) with GRIN2A. Interacts (via PDZ domains) with KCND2 and KCND3. Interacts (via PDZ domains) with KCNA1, KCNA2, KCNA3 and KCNA4. Interacts (via PDZ domains) with ADGRA3. Interacts with KCNF1. Interacts with CAMK2. Interacts with cytoskeleton-associated protein EPB41. Interacts with cytoskeleton-associated protein EZR. Found in a complex with KCNA5 and CAV3. Found in a complex with APC and CTNNB1. Interacts (via PDZ domains) with APC. Interacts with CDH1 through binding to PIK3R1. Forms multiprotein complexes with CASK, LIN7A, LIN7B, LIN7C, APBA1, and KCNJ12. Interacts with TOPK. Forms a tripartite complex composed of DLG1, MPP7 and LIN7 (LIN7A or LIN7C). May interact with TJAP1. Interacts with PTEN. Interacts with FRMPD4 (via C-terminus). Interacts with LRFN1, LRFN2 and LRFN4. Interacts with SFPQ. Interacts (via PDZ domains) with ADGRA2 (via PDZ-binding motif). Interacts with ADAM10; this interaction recruits ADAM10 to the cell membrane during long-term depression in hippocampal neurons. Interacts with DGKI (via PDZ-binding motif). Interacts (via PDZ domains) with MARCHF2 (via PDZ domain); the interaction leads to DLG1 ubiqtuitination and degradation. Interacts (via N-terminus) with MPP3; this interaction connects CADM1 with DLG1 and links CADM1 with the regulatory subunit of phosphoinositide-3-kinase (PI3K) by forming a multiprotein complex and participates in cell spreading. In terms of assembly, (Microbial infection) Interacts with HTLV-1 protein Tax. (Microbial infection) Interacts (via PDZ domains 1 and 2) with influenza A virus protein NS1; the interaction results in the translocation of DLG1 from the cell membrane to perinuclear puncta. Acts as a scaffold protein to facilitate the interaction between LIN7C and influenza A virus protein NS1; the interaction facilitates translocation of LIN7C to cytoplasmic puncta. As to quaternary structure, (Microbial infection) Interacts with human papillomavirus 18/HPV-18 protein E6. Post-translationally, phosphorylated by MAPK12. Phosphorylation of Ser-232 regulates association with GRIN2A. In terms of processing, ubiquitinated; by MARCHF2 which results in its degradation. In terms of tissue distribution, abundantly expressed in atrial myocardium (at protein level). Expressed in lung fibroblasts, cervical epithelial and B-cells (at protein level). Expressed in the brain (at protein level). Widely expressed, with isoforms displaying different expression profiles.

It localises to the cell membrane. Its subcellular location is the basolateral cell membrane. It is found in the endoplasmic reticulum membrane. The protein resides in the postsynaptic density. The protein localises to the synapse. It localises to the sarcolemma. Its subcellular location is the apical cell membrane. It is found in the cell junction. The protein resides in the cytoplasm. Functionally, essential multidomain scaffolding protein required for normal development. Recruits channels, receptors and signaling molecules to discrete plasma membrane domains in polarized cells. Promotes epithelial cell layer barrier function via maintaining cell-cell adhesion. May also play a role in adherens junction assembly, signal transduction, cell proliferation, synaptogenesis and lymphocyte activation. Regulates the excitability of cardiac myocytes by modulating the functional expression of Kv4 channels. Functional regulator of Kv1.5 channel. During long-term depression in hippocampal neurons, it recruits ADAM10 to the plasma membrane. The protein is Disks large homolog 1 of Homo sapiens (Human).